The sequence spans 472 residues: Glycosyl hydrolase family 109 protein (472 aa).

Positions 1–35 (MSQTPAVSRRLLLGSAAATGALATGIGSAAPVAAA) form a signal peptide, tat-type signal. NAD(+) is bound by residues 68–69 (NR), Asp90, 139–142 (WEFH), His145, 159–160 (EL), and Asn188. Residues Tyr217, Arg236, 248 to 251 (YPMH), and Tyr330 each bind substrate. NAD(+) is bound at residue Tyr248.

Belongs to the Gfo/Idh/MocA family. Glycosyl hydrolase 109 subfamily. The cofactor is NAD(+). Predicted to be exported by the Tat system. The position of the signal peptide cleavage has not been experimentally proven.

Functionally, glycosidase. Has no alpha-N-acetylgalactosaminidase activity. The polypeptide is Glycosyl hydrolase family 109 protein (Streptomyces coelicolor (strain ATCC BAA-471 / A3(2) / M145)).